The primary structure comprises 443 residues: Amino-acid acetyltransferase (443 aa).

An N-acetyltransferase domain is found at 296 to 434 (EQIRRATIND…KKLMYNYQRR (139 aa)).

The protein belongs to the acetyltransferase family. ArgA subfamily. Homohexamer.

Its subcellular location is the cytoplasm. The catalysed reaction is L-glutamate + acetyl-CoA = N-acetyl-L-glutamate + CoA + H(+). Its pathway is amino-acid biosynthesis; L-arginine biosynthesis; N(2)-acetyl-L-ornithine from L-glutamate: step 1/4. The protein is Amino-acid acetyltransferase of Escherichia fergusonii (strain ATCC 35469 / DSM 13698 / CCUG 18766 / IAM 14443 / JCM 21226 / LMG 7866 / NBRC 102419 / NCTC 12128 / CDC 0568-73).